Consider the following 1292-residue polypeptide: Epidermal growth factor receptor (1292 aa).

Over 1 to 641 (MYNNYNLCHI…AGLIENELQP (641 aa)) the chain is Extracellular. Residues Asn31, Asn224, Asn263, Asn323, Asn342, Asn600, and Asn605 are each glycosylated (N-linked (GlcNAc...) asparagine). A helical transmembrane segment spans residues 642-662 (AILAGVAVFALAFLVVAAIIM). Residues 663–1292 (YFWRVRAKAK…KPLRKNETTV (630 aa)) lie on the Cytoplasmic side of the membrane. The residue at position 675 (Thr675) is a Phosphothreonine; by PKC. Residues 711–978 (MRKGGILGYG…KMSRDPGRYL (268 aa)) enclose the Protein kinase domain. ATP contacts are provided by residues 717–725 (LGYGAFGNV) and Lys744. The active-site Proton acceptor is Asp836. The interval 1022 to 1066 (PKSRAPIPPGLSASSTSGSPPNTPVKPCWPNGKPLAADSPTPQNQ) is disordered. Position 1166 is a phosphotyrosine; by autocatalysis (Tyr1166). The tract at residues 1253–1292 (SQVRQRSSEEESDHEYYNDFDRLERELQPLKPLRKNETTV) is disordered. The span at 1258 to 1292 (RSSEEESDHEYYNDFDRLERELQPLKPLRKNETTV) shows a compositional bias: basic and acidic residues.

It belongs to the protein kinase superfamily. Tyr protein kinase family. EGF receptor subfamily.

Its subcellular location is the membrane. It carries out the reaction L-tyrosyl-[protein] + ATP = O-phospho-L-tyrosyl-[protein] + ADP + H(+). Activated by MRJP1 during queen determination of honeybee larvae. Functionally, upon binding to its ligands, transduces the signal through the ras-raf-MAPK pathway and is involved in a myriad of developmental decisions. Involved in the determination of adult size, ovary development, and development timing, especially during queen determination of honeybee larvae. May have an important role in the prolongation of longevity in queens. The sequence is that of Epidermal growth factor receptor (Egfr) from Apis mellifera (Honeybee).